Here is a 195-residue protein sequence, read N- to C-terminus: uncharacterized protein (195 aa).

The region spanning 10 to 70 (EETVARLLQA…ATAYEVLRRQ (61 aa)) is the HTH tetR-type domain. A DNA-binding region (H-T-H motif) is located at residues 33–52 (SAAVITKRAGVSVGALFRHF).

This is an uncharacterized protein from Mycobacterium tuberculosis (strain CDC 1551 / Oshkosh).